Reading from the N-terminus, the 511-residue chain is Bifunctional purine biosynthesis protein PurH (511 aa).

Positions Met-1 to Val-145 constitute an MGS-like domain.

This sequence belongs to the PurH family.

The enzyme catalyses (6R)-10-formyltetrahydrofolate + 5-amino-1-(5-phospho-beta-D-ribosyl)imidazole-4-carboxamide = 5-formamido-1-(5-phospho-D-ribosyl)imidazole-4-carboxamide + (6S)-5,6,7,8-tetrahydrofolate. The catalysed reaction is IMP + H2O = 5-formamido-1-(5-phospho-D-ribosyl)imidazole-4-carboxamide. It functions in the pathway purine metabolism; IMP biosynthesis via de novo pathway; 5-formamido-1-(5-phospho-D-ribosyl)imidazole-4-carboxamide from 5-amino-1-(5-phospho-D-ribosyl)imidazole-4-carboxamide (10-formyl THF route): step 1/1. The protein operates within purine metabolism; IMP biosynthesis via de novo pathway; IMP from 5-formamido-1-(5-phospho-D-ribosyl)imidazole-4-carboxamide: step 1/1. This Bacillus thuringiensis subsp. konkukian (strain 97-27) protein is Bifunctional purine biosynthesis protein PurH.